The primary structure comprises 561 residues: Arginine--tRNA ligase (561 aa).

The 'HIGH' region signature appears at 108-118; sequence PNVAKEMHVGH.

It belongs to the class-I aminoacyl-tRNA synthetase family. As to quaternary structure, monomer.

Its subcellular location is the cytoplasm. The enzyme catalyses tRNA(Arg) + L-arginine + ATP = L-arginyl-tRNA(Arg) + AMP + diphosphate. This Haemophilus ducreyi (strain 35000HP / ATCC 700724) protein is Arginine--tRNA ligase.